The primary structure comprises 416 residues: S-adenosylmethionine synthase (416 aa).

His-14 contributes to the ATP binding site. Asp-16 serves as a coordination point for Mg(2+). Glu-42 contacts K(+). Glu-55 and Gln-98 together coordinate L-methionine. The tract at residues 98 to 108 (QSADINQGVDR) is flexible loop. Residues 164 to 166 (DAK), 240 to 241 (KF), Asp-249, 255 to 256 (RK), Ala-272, and Lys-276 contribute to the ATP site. Residue Asp-249 participates in L-methionine binding. Position 280 (Lys-280) interacts with L-methionine.

The protein belongs to the AdoMet synthase family. As to quaternary structure, homotetramer; dimer of dimers. The cofactor is Mg(2+). It depends on K(+) as a cofactor.

The protein resides in the cytoplasm. The enzyme catalyses L-methionine + ATP + H2O = S-adenosyl-L-methionine + phosphate + diphosphate. Its pathway is amino-acid biosynthesis; S-adenosyl-L-methionine biosynthesis; S-adenosyl-L-methionine from L-methionine: step 1/1. In terms of biological role, catalyzes the formation of S-adenosylmethionine (AdoMet) from methionine and ATP. The overall synthetic reaction is composed of two sequential steps, AdoMet formation and the subsequent tripolyphosphate hydrolysis which occurs prior to release of AdoMet from the enzyme. This Flavobacterium johnsoniae (strain ATCC 17061 / DSM 2064 / JCM 8514 / BCRC 14874 / CCUG 350202 / NBRC 14942 / NCIMB 11054 / UW101) (Cytophaga johnsonae) protein is S-adenosylmethionine synthase.